A 182-amino-acid polypeptide reads, in one-letter code: Large ribosomal subunit protein uL5 (182 aa).

This sequence belongs to the universal ribosomal protein uL5 family. Part of the 50S ribosomal subunit; part of the 5S rRNA/L5/L18/L25 subcomplex. Contacts the 5S rRNA and the P site tRNA. Forms a bridge to the 30S subunit in the 70S ribosome.

Its function is as follows. This is one of the proteins that bind and probably mediate the attachment of the 5S RNA into the large ribosomal subunit, where it forms part of the central protuberance. In the 70S ribosome it contacts protein S13 of the 30S subunit (bridge B1b), connecting the 2 subunits; this bridge is implicated in subunit movement. Contacts the P site tRNA; the 5S rRNA and some of its associated proteins might help stabilize positioning of ribosome-bound tRNAs. The protein is Large ribosomal subunit protein uL5 of Thermus thermophilus (strain ATCC BAA-163 / DSM 7039 / HB27).